The chain runs to 285 residues: Golgi phosphoprotein 3-like (285 aa).

The interval 1–43 (MTTLTHRTRRTEVSKSSEKKIESEEDTNQERSPDNEDPGDSKD) is disordered. Residues 10–43 (RTEVSKSSEKKIESEEDTNQERSPDNEDPGDSKD) are compositionally biased toward basic and acidic residues. A 1,2-diacyl-sn-glycero-3-phospho-(1D-myo-inositol 4-phosphate)-binding residues include Trp-67 and Arg-76. Ser-112 carries the post-translational modification Phosphoserine. A 1,2-diacyl-sn-glycero-3-phospho-(1D-myo-inositol 4-phosphate) contacts are provided by Arg-157 and Arg-160. The segment at 176–187 (EKQNFLLFDMTT) is beta-hairpin required for oligomerization.

The protein belongs to the GOLPH3/VPS74 family. As to quaternary structure, homooligomer. Does not interact MYO18; differs from GOLPH3 by its inability to interact with MYO18. May interact with ARF1. Expressed in a subset of tissues tested with higher expression in salivary gland, small intestine and skin (at protein level).

Its subcellular location is the golgi apparatus. The protein resides in the golgi stack membrane. It is found in the trans-Golgi network membrane. Its function is as follows. Phosphatidylinositol-4-phosphate-binding protein that may antagonize the action of GOLPH3 which is required for the process of vesicle budding at the Golgi and anterograde transport to the plasma membrane. The sequence is that of Golgi phosphoprotein 3-like (Golph3l) from Mus musculus (Mouse).